The primary structure comprises 270 residues: MLTIGQLARIFEISTKTLRHYDAIGLFVPARTGSDNGYRYYQPEQIEQLSRILALRRLDVPLEAIDRLKRDGALDDPQRLRHFLQRHQHTLREEISARQRLLAELDRTLATLAHWRIRNMHARIVERPAFSVVGMEYFGSAPGDTIGQLWERFIPREHEIAGKHDPEVSYGICAQQPNGEFHYVAGFEVQEGWPVPEGMVRFQVPAQKYAVFTHKGTAPQIAESFQAIYSHLLAERGLEPKAGVDFEYYDQRFRGPLDPNSQVDLYIPIY.

Residue M1 participates in 3',3'-c-di-GMP binding. Positions 1 to 71 (MLTIGQLARI…LEAIDRLKRD (71 aa)) constitute an HTH merR-type domain. The H-T-H motif DNA-binding region spans 4 to 23 (IGQLARIFEISTKTLRHYDA). R31, S34, D35, Y40, R67, R70, R86, and Y270 together coordinate 3',3'-c-di-GMP. Residues 120-270 (MHARIVERPA…SQVDLYIPIY (151 aa)) form an involved in effector-binding, probably including pyocyanine-binding region.

In terms of assembly, monomer. Homodimer; dimer formation enhanced in the presence of the second messenger, cyclic di-GMP (c-di-GMP). Homotetramer; dimer of dimers, arranged in a head-to-tail fashion, which may reduce DNA-binding ability. Conformational changes upon binding c-di-GMP or pyocyanine may facilitate DNA binding.

Its function is as follows. Transcriptional regulator. Responsive to the second messenger cyclic di-GMP (c-di-GMP) and to the virulence factor pyocyanine, which both enhance gene expression and promoter DNA binding of BrlR. Activates expression of operons encoding the multidrug efflux pumps MexAB-OprM and MexEF-OprN and several ABC transport systems, acting by direct binding to their respective promoters. Also acts as a repressor of the two component regulatory system, PhoPQ. Binds to promoter of its own gene. Contributes to the antimicrobial tolerance exhibited by biofilms, acting, at least in part, by activating expression of multidrug efflux pumps and ABC transporters. This chain is Transcriptional regulator BrlR, found in Pseudomonas aeruginosa (strain ATCC 15692 / DSM 22644 / CIP 104116 / JCM 14847 / LMG 12228 / 1C / PRS 101 / PAO1).